We begin with the raw amino-acid sequence, 258 residues long: Isoprenyl transferase 2 (258 aa).

A compositionally biased stretch (pro residues) spans methionine 1–leucine 18. The disordered stretch occupies residues methionine 1–glutamine 21. The active site involves aspartate 32. A Mg(2+)-binding site is contributed by aspartate 32. Substrate contacts are provided by residues glycine 33 to arginine 36, tryptophan 37, arginine 45, histidine 49, and serine 77 to glutamate 79. The active-site Proton acceptor is asparagine 80. Substrate contacts are provided by residues tryptophan 81, arginine 83, arginine 200, and arginine 206–serine 208. Residue glutamate 219 coordinates Mg(2+).

The protein belongs to the UPP synthase family. As to quaternary structure, homodimer. The cofactor is Mg(2+).

Catalyzes the condensation of isopentenyl diphosphate (IPP) with allylic pyrophosphates generating different type of terpenoids. The polypeptide is Isoprenyl transferase 2 (Nostoc sp. (strain PCC 7120 / SAG 25.82 / UTEX 2576)).